Here is a 167-residue protein sequence, read N- to C-terminus: uncharacterized protein (167 aa).

Positions 70 to 118 (KIVELRKAMESIITELAYIKGELKGLQEKGESKVERKEIIEEKIQKAMV) form a coiled coil. Positions 128 to 155 (EKEERKPAKESKRREHDVIIPEGKKEER) are enriched in basic and acidic residues. Residues 128 to 167 (EKEERKPAKESKRREHDVIIPEGKKEERTDDGEDGLIVCD) form a disordered region.

This is an uncharacterized protein from Archaeoglobus fulgidus (strain ATCC 49558 / DSM 4304 / JCM 9628 / NBRC 100126 / VC-16).